The following is an 831-amino-acid chain: Periplasmic nitrate reductase (831 aa).

The tat-type signal signal peptide spans 1–29 (MKISRRDFIKQTAITATASVAGVTLPAGA). The 4Fe-4S Mo/W bis-MGD-type domain maps to 41–97 (LKWSKAPCRFCGTGCGVTVAVKDNKVVATQGDPQAEVNKGLNCVKGYFLSKIMYGQD). [4Fe-4S] cluster contacts are provided by cysteine 48, cysteine 51, cysteine 55, and cysteine 83. Residues lysine 85, glutamine 152, asparagine 177, cysteine 181, 214–221 (WGSNMAEM), 245–249 (STFTH), 264–266 (QTD), methionine 375, glutamine 379, asparagine 485, 511–512 (SD), lysine 534, aspartate 561, and 721–730 (TGRVLEHWHS) contribute to the Mo-bis(molybdopterin guanine dinucleotide) site. Residue tryptophan 797 coordinates substrate. Mo-bis(molybdopterin guanine dinucleotide)-binding residues include asparagine 805 and lysine 822.

This sequence belongs to the prokaryotic molybdopterin-containing oxidoreductase family. NasA/NapA/NarB subfamily. Component of the periplasmic nitrate reductase NapAB complex composed of NapA and NapB. The cofactor is [4Fe-4S] cluster. Requires Mo-bis(molybdopterin guanine dinucleotide) as cofactor. Predicted to be exported by the Tat system. The position of the signal peptide cleavage has been experimentally proven.

The protein resides in the periplasm. It carries out the reaction 2 Fe(II)-[cytochrome] + nitrate + 2 H(+) = 2 Fe(III)-[cytochrome] + nitrite + H2O. In terms of biological role, catalytic subunit of the periplasmic nitrate reductase complex NapAB. Receives electrons from NapB and catalyzes the reduction of nitrate to nitrite. This chain is Periplasmic nitrate reductase, found in Cupriavidus necator (strain ATCC 17699 / DSM 428 / KCTC 22496 / NCIMB 10442 / H16 / Stanier 337) (Ralstonia eutropha).